Here is a 304-residue protein sequence, read N- to C-terminus: MEKCTESLPNLNAETSFLRGGNLILQPQVQHPTDDKPPITGQVVPALNTPVMSGPYSGDHIPQFHGNPASVKGFFAQVTTYLRALDISNPADNARVKHFFDYLSQQMQNCDVLSESTQNNLLKQYENFVLELQQSFGEPMTQETTPPMNVTVDKSNISPQDATNFQLHAPNLSYRETNQRDQFQNGQADPTQNEEITDIMDNLPDLITQCIQLDKKHKDRPELLQSESHVPMFASTNHYQSFIGPVRPLPKDGPRQLQGAHLPVTPAKRARQQETQLCVYCNQAGHFTRDCLAKRSRTPARKKM.

A CCHC-type zinc finger spans residues 276–293 (QLCVYCNQAGHFTRDCLA).

As to expression, in adults, expressed in brain, eye, kidney, ovary and testis. Weakly expressed in thymus, heart and muscle.

Functionally, involved in cognitive function in the brain, possibly via the noradrenergic system. The protein is Retrotransposon Gag-like protein 4 of Mus musculus (Mouse).